Reading from the N-terminus, the 126-residue chain is Large-conductance mechanosensitive channel (126 aa).

The next 2 helical transmembrane spans lie at 14 to 34 (VLDLAVGVIIGGAFTGIVKSL) and 69 to 89 (GAFLNDVINFLITAFVVFLLV).

It belongs to the MscL family. Homopentamer.

The protein localises to the cell membrane. Functionally, channel that opens in response to stretch forces in the membrane lipid bilayer. May participate in the regulation of osmotic pressure changes within the cell. The sequence is that of Large-conductance mechanosensitive channel from Leuconostoc citreum (strain KM20).